The chain runs to 311 residues: Olfactory receptor 1N1 (311 aa).

Over 1–23 the chain is Extracellular; the sequence is MENQSSISEFFLRGISAPPEQQQ. Asn-3 carries an N-linked (GlcNAc...) asparagine glycan. Residues 24-47 traverse the membrane as a helical segment; it reads SLFGIFLCMYLVTLTGNLLIILAI. At 48–55 the chain is on the cytoplasmic side; sequence GSDLHLHT. Residues 56–77 traverse the membrane as a helical segment; it reads PMYFFLANLSFVDMGLTSSTVT. The Extracellular segment spans residues 78-98; that stretch reads KMLVNIQTRHHTISYTGCLTQ. The cysteines at positions 95 and 187 are disulfide-linked. The helical transmembrane segment at 99–118 threads the bilayer; that stretch reads MYFFLMFGDLDSFFLAAMAY. Over 119 to 137 the chain is Cytoplasmic; it reads DRYVAICHPLCYSTVMRPQ. A helical transmembrane segment spans residues 138–156; sequence VCALMLALCWVLTNIVALT. The Extracellular portion of the chain corresponds to 157–194; that stretch reads HTFLMARLSFCVTGEIAHFFCDITPVLKLSCSDTHINE. A helical transmembrane segment spans residues 195–217; the sequence is MMVFVLGGTVLIVPFLCIVTSYI. The Cytoplasmic portion of the chain corresponds to 218-234; the sequence is HIVPAILRVRTRGGVGK. Residues 235 to 257 traverse the membrane as a helical segment; the sequence is AFSTCSSHLCVVCVFYGTLFSAY. At 258 to 270 the chain is on the extracellular side; that stretch reads LCPPSIASEEKDI. The helical transmembrane segment at 271–290 threads the bilayer; sequence AAAAMYTIVTPMLNPFIYSL. Residues 291–311 are Cytoplasmic-facing; sequence RNKDMKGALKRLFSHRSIVSS.

This sequence belongs to the G-protein coupled receptor 1 family.

Its subcellular location is the cell membrane. Functionally, odorant receptor. In Homo sapiens (Human), this protein is Olfactory receptor 1N1 (OR1N1).